A 454-amino-acid polypeptide reads, in one-letter code: MSDNDTIVAQATPPGRGGVGILRISGFKAREVAETVLGKLPKPRYADYLPFKDADGSVLDQGIALWFPGPNSFTGEDVLELQGHGGPVILDLLLKRILTIPGLRIARPGEFSERAFLNDKLDLAQAEAIADLIDASSEQAARSALNSLQGAFSARVNHLVEALTHLRIYVEAAIDFPDEEIDFLSDGKIEAQLNDVMADLDAVRAEARQGSLLREGMKVVIAGRPNAGKSSLLNALAGREAAIVTDIAGTTRDVLREHIHIDGMPLHIIDTAGLREASDEVERIGIERAWQEIEQADRVLFMVDGTTTDAVDPAEIWPEFIARLPAKLPITVVRNKADITGETLGMSEVNGHALIRLSARTGEGVDVLRNHLKQSMGFDTNMEGGFLARRRHLQALEQAAEHLQQGKAQLLGAWAGELLAEELRLAQQNLSEITGEFTSDDLLGRIFSSFCIGK.

Arg23, Glu80, and Lys120 together coordinate (6S)-5-formyl-5,6,7,8-tetrahydrofolate. The 162-residue stretch at 216–377 (GMKVVIAGRP…LRNHLKQSMG (162 aa)) folds into the TrmE-type G domain. Asn226 lines the K(+) pocket. GTP is bound by residues 226–231 (NAGKSS), 245–251 (TDIAGTT), 270–273 (DTAG), 335–338 (NKAD), and 358–360 (SAR). Ser230 is a Mg(2+) binding site. Positions 245, 247, and 250 each coordinate K(+). Mg(2+) is bound at residue Thr251. Lys454 contacts (6S)-5-formyl-5,6,7,8-tetrahydrofolate.

This sequence belongs to the TRAFAC class TrmE-Era-EngA-EngB-Septin-like GTPase superfamily. TrmE GTPase family. In terms of assembly, homodimer. Heterotetramer of two MnmE and two MnmG subunits. The cofactor is K(+).

It localises to the cytoplasm. Functionally, exhibits a very high intrinsic GTPase hydrolysis rate. Involved in the addition of a carboxymethylaminomethyl (cmnm) group at the wobble position (U34) of certain tRNAs, forming tRNA-cmnm(5)s(2)U34. The sequence is that of tRNA modification GTPase MnmE from Shigella flexneri serotype 5b (strain 8401).